A 302-amino-acid polypeptide reads, in one-letter code: Pyridoxal 5'-phosphate synthase subunit PdxS (302 aa).

Aspartate 32 lines the D-ribose 5-phosphate pocket. The Schiff-base intermediate with D-ribose 5-phosphate role is filled by lysine 89. A D-ribose 5-phosphate-binding site is contributed by glycine 161. Arginine 173 lines the D-glyceraldehyde 3-phosphate pocket. Residues glycine 222 and 243-244 (GS) contribute to the D-ribose 5-phosphate site. The disordered stretch occupies residues 275 to 302 (IAKNPGKGMKGQANADLDEEEQLQGRGV).

Belongs to the PdxS/SNZ family. As to quaternary structure, in the presence of PdxT, forms a dodecamer of heterodimers.

It catalyses the reaction aldehydo-D-ribose 5-phosphate + D-glyceraldehyde 3-phosphate + L-glutamine = pyridoxal 5'-phosphate + L-glutamate + phosphate + 3 H2O + H(+). Its pathway is cofactor biosynthesis; pyridoxal 5'-phosphate biosynthesis. Functionally, catalyzes the formation of pyridoxal 5'-phosphate from ribose 5-phosphate (RBP), glyceraldehyde 3-phosphate (G3P) and ammonia. The ammonia is provided by the PdxT subunit. Can also use ribulose 5-phosphate and dihydroxyacetone phosphate as substrates, resulting from enzyme-catalyzed isomerization of RBP and G3P, respectively. In Haloarcula marismortui (strain ATCC 43049 / DSM 3752 / JCM 8966 / VKM B-1809) (Halobacterium marismortui), this protein is Pyridoxal 5'-phosphate synthase subunit PdxS.